The chain runs to 420 residues: Mannose-1-phosphate guanylyltransferase regulatory subunit alpha (420 aa).

The tract at residues 2 to 251 is substrate-binding domain; sequence LKAVILIGGP…DGIWSQIKSA (250 aa). GDP-alpha-D-mannose-binding residues include Glu85 and Gln247. The hexapeptide repeat domain stretch occupies residues 273-420; the sequence is LARHTAGGPR…SRSFTNQIIL (148 aa). Residues 356 to 384 are C-loop; it reads TPNDPNPNDPRARMDSESLFKDGKLLPAI.

This sequence belongs to the transferase hexapeptide repeat family. In terms of assembly, component of the GMPPA-GMPPB mannose-1-phosphate guanylyltransferase complex composed of 4 GMPPA subunits and 8 GMPPB subunits; the complex is organized into three layers, a central layer made up of 2 GMPPA dimers sandwiched between two layers each made up of 2 GMPPB dimers.

It localises to the cytoplasm. In terms of biological role, regulatory subunit of the GMPPA-GMPPB mannose-1-phosphate guanylyltransferase complex; reduces the catalytic activity of GMPPB when part of the complex. Mediates allosteric feedback inhibition of GMPPB catalytic activity upon binding GDP-alpha-D-mannose. Together with GMPPB regulates GDP-alpha-D-mannose levels. This is Mannose-1-phosphate guanylyltransferase regulatory subunit alpha (Gmppa) from Rattus norvegicus (Rat).